A 375-amino-acid polypeptide reads, in one-letter code: Kininogen (375 aa).

The N-terminal stretch at Met1–Gly23 is a signal peptide. 2 consecutive Cystatin kininogen-type domains span residues Cys35–Pro139 and Val156–Asp260. The N-linked (GlcNAc) asparagine glycan is linked to Asn74. 4 disulfide bridges follow: Cys91–Cys102, Cys115–Cys133, Cys211–Cys223, and Cys234–Cys254. An N-linked (GlcNAc) asparagine glycan is attached at Asn235. Residues Glu283–Lys375 form a disordered region.

Post-translationally, N-glycosylated, with sialylated biantennary complex-type glycans. O-glycosylated, sialylated oligosaccharides. In terms of processing, bradykinin is released from kininogen by kallikrein. Post-translationally, the N-terminus is blocked. In terms of tissue distribution, expressed in the skin, liver, intestine, spleen, pancreas and kidney.

Its subcellular location is the cytoplasm. The protein resides in the vacuole. In terms of biological role, inhibits papain and ficin (cysteine proteinases) but not trypsin (a serine proteinase). The protein is Kininogen (LOC106584303) of Salmo salar (Atlantic salmon).